The following is a 498-amino-acid chain: Putative antiporter subunit mnhD2 (498 aa).

14 helical membrane passes run 2–22 (LSNL…ILVF), 32–52 (YLYL…LIYV), 78–98 (LSLI…AYGF), 108–128 (YHLP…FLTS), 130–150 (LFNL…LITL), 161–181 (IIYV…IGLL), 209–229 (ISLI…FMWL), 240–260 (LAAL…IRFF), 271–291 (IHPL…IGVI), 308–328 (IGFI…GAIF), 330–350 (LVND…LVYI), 369–389 (FGVA…FSGF), 403–423 (GNYI…YSLF), and 451–471 (ILSI…VVLN).

The protein belongs to the CPA3 antiporters (TC 2.A.63) subunit D family. In terms of assembly, may form a heterooligomeric complex that consists of seven subunits: mnhA2, mnhB2, mnhC2, mnhD2, mnhE2, mnhF2 and mnhG2.

The protein localises to the cell membrane. The chain is Putative antiporter subunit mnhD2 (mnhD2) from Staphylococcus aureus (strain JH1).